Here is a 316-residue protein sequence, read N- to C-terminus: Porphobilinogen deaminase (316 aa).

S-(dipyrrolylmethanemethyl)cysteine is present on Cys249.

This sequence belongs to the HMBS family. As to quaternary structure, monomer. Requires dipyrromethane as cofactor.

It carries out the reaction 4 porphobilinogen + H2O = hydroxymethylbilane + 4 NH4(+). Its pathway is porphyrin-containing compound metabolism; protoporphyrin-IX biosynthesis; coproporphyrinogen-III from 5-aminolevulinate: step 2/4. Functionally, tetrapolymerization of the monopyrrole PBG into the hydroxymethylbilane pre-uroporphyrinogen in several discrete steps. This Nitrobacter winogradskyi (strain ATCC 25391 / DSM 10237 / CIP 104748 / NCIMB 11846 / Nb-255) protein is Porphobilinogen deaminase.